Consider the following 123-residue polypeptide: MEVKNIGIPHVLPPASVCDDPLCPWHGHLKVRLKLLEVTVEKVRMHKAAVVIHEWLHYIRKYNRYERRRKRMRVRVPECIEVKPGDKVIIAETRPLSKTIAWVVIGKKEDVVEWKAKHETLQA.

It belongs to the universal ribosomal protein uS17 family. Part of the 30S ribosomal subunit.

Its function is as follows. One of the primary rRNA binding proteins, it binds specifically to the 5'-end of 16S ribosomal RNA. This Pyrobaculum aerophilum (strain ATCC 51768 / DSM 7523 / JCM 9630 / CIP 104966 / NBRC 100827 / IM2) protein is Small ribosomal subunit protein uS17.